The primary structure comprises 364 residues: Putative [LysW]-aminoadipate semialdehyde/glutamate semialdehyde transaminase (364 aa).

Pyridoxal 5'-phosphate is bound by residues 90–91 (GT) and F117. R120 serves as a coordination point for substrate. 202–205 (DEVQ) serves as a coordination point for pyridoxal 5'-phosphate. Residue K230 is modified to N6-(pyridoxal phosphate)lysine. Position 254 (S254) interacts with substrate. T255 is a pyridoxal 5'-phosphate binding site.

Belongs to the class-III pyridoxal-phosphate-dependent aminotransferase family. LysJ subfamily. As to quaternary structure, homodimer. Pyridoxal 5'-phosphate is required as a cofactor.

It localises to the cytoplasm. The catalysed reaction is [amino-group carrier protein]-C-terminal-gamma-(L-lysyl)-L-glutamate + 2-oxoglutarate = [amino-group carrier protein]-C-terminal-N-(1-carboxy-5-oxopentan-1-yl)-L-glutamine + L-glutamate. The enzyme catalyses [amino-group carrier protein]-C-terminal-gamma-(L-ornithyl)-L-glutamate + 2-oxoglutarate = [amino-group carrier protein]-C-terminal-gamma-(L-glutamyl-5-semialdehyde)-L-glutamate + L-glutamate. It functions in the pathway amino-acid biosynthesis; L-lysine biosynthesis via AAA pathway; L-lysine from L-alpha-aminoadipate (Thermus route): step 4/5. The protein operates within amino-acid biosynthesis; L-arginine biosynthesis. Functionally, involved in both the arginine and lysine biosynthetic pathways. In Pyrococcus abyssi (strain GE5 / Orsay), this protein is Putative [LysW]-aminoadipate semialdehyde/glutamate semialdehyde transaminase.